The sequence spans 581 residues: Oligo-1,6-glucosidase IMA5 (581 aa).

The active-site Nucleophile is the aspartate 210. Glutamate 272 serves as the catalytic Proton donor.

The protein belongs to the glycosyl hydrolase 13 family.

The enzyme catalyses Hydrolysis of (1-&gt;6)-alpha-D-glucosidic linkages in some oligosaccharides produced from starch and glycogen by alpha-amylase, and in isomaltose.. Its function is as follows. Alpha-glucosidase with specificity for isomaltose, maltose, and palatinose. This chain is Oligo-1,6-glucosidase IMA5 (IMA5), found in Saccharomyces cerevisiae (strain ATCC 204508 / S288c) (Baker's yeast).